We begin with the raw amino-acid sequence, 234 residues long: Segregation and condensation protein A (234 aa).

The protein belongs to the ScpA family. As to quaternary structure, component of a cohesin-like complex composed of ScpA, ScpB and the Smc homodimer, in which ScpA and ScpB bind to the head domain of Smc. The presence of the three proteins is required for the association of the complex with DNA.

Its subcellular location is the cytoplasm. Participates in chromosomal partition during cell division. May act via the formation of a condensin-like complex containing Smc and ScpB that pull DNA away from mid-cell into both cell halves. This is Segregation and condensation protein A from Streptococcus pyogenes serotype M5 (strain Manfredo).